The sequence spans 853 residues: Transcription factor macR (853 aa).

A DNA-binding region (zn(2)-C6 fungal-type) is located at residues 18-45; that stretch reads CIVCRRRKVRCGREQPECANCVRMKENC. 4 disordered regions span residues 54–122, 138–166, 734–775, and 833–853; these read ESTG…PYPT, ANAP…PTPS, ASDL…AGNK, and LGSQ…DFPG. Polar residues-rich tracts occupy residues 104–116, 141–163, and 738–752; these read PQVS…SPQR, PQIN…SLFP, and RATS…SSTT.

It localises to the nucleus. In terms of biological role, transcription factor that regulates the expression of the gene cluster that mediates the biosynthesis of macrophorins, isoprenoid epoxycyclohexenones containing cyclized drimane moieties. The polypeptide is Transcription factor macR (Penicillium terrestre).